A 354-amino-acid polypeptide reads, in one-letter code: Chorismate synthase (354 aa).

Position 48 (arginine 48) interacts with NADP(+). FMN-binding positions include 125–127 (RAS), alanine 280, 295–299 (KPIPS), and arginine 321.

Belongs to the chorismate synthase family. Homotetramer. FMNH2 serves as cofactor.

The enzyme catalyses 5-O-(1-carboxyvinyl)-3-phosphoshikimate = chorismate + phosphate. It participates in metabolic intermediate biosynthesis; chorismate biosynthesis; chorismate from D-erythrose 4-phosphate and phosphoenolpyruvate: step 7/7. Functionally, catalyzes the anti-1,4-elimination of the C-3 phosphate and the C-6 proR hydrogen from 5-enolpyruvylshikimate-3-phosphate (EPSP) to yield chorismate, which is the branch point compound that serves as the starting substrate for the three terminal pathways of aromatic amino acid biosynthesis. This reaction introduces a second double bond into the aromatic ring system. This Syntrophus aciditrophicus (strain SB) protein is Chorismate synthase.